We begin with the raw amino-acid sequence, 87 residues long: DNA-directed RNA polymerase subunit omega (87 aa).

It belongs to the RNA polymerase subunit omega family. As to quaternary structure, the RNAP catalytic core consists of 2 alpha, 1 beta, 1 beta' and 1 omega subunit. When a sigma factor is associated with the core the holoenzyme is formed, which can initiate transcription.

The enzyme catalyses RNA(n) + a ribonucleoside 5'-triphosphate = RNA(n+1) + diphosphate. Its function is as follows. Promotes RNA polymerase assembly. Latches the N- and C-terminal regions of the beta' subunit thereby facilitating its interaction with the beta and alpha subunits. In Pseudomonas syringae pv. syringae (strain B728a), this protein is DNA-directed RNA polymerase subunit omega.